A 487-amino-acid chain; its full sequence is Glutamyl-tRNA(Gln) amidotransferase subunit A (487 aa).

Catalysis depends on charge relay system residues K79 and S158. The Acyl-ester intermediate role is filled by S182.

The protein belongs to the amidase family. GatA subfamily. In terms of assembly, heterotrimer of A, B and C subunits.

It carries out the reaction L-glutamyl-tRNA(Gln) + L-glutamine + ATP + H2O = L-glutaminyl-tRNA(Gln) + L-glutamate + ADP + phosphate + H(+). Allows the formation of correctly charged Gln-tRNA(Gln) through the transamidation of misacylated Glu-tRNA(Gln) in organisms which lack glutaminyl-tRNA synthetase. The reaction takes place in the presence of glutamine and ATP through an activated gamma-phospho-Glu-tRNA(Gln). The chain is Glutamyl-tRNA(Gln) amidotransferase subunit A from Ehrlichia canis (strain Jake).